The following is a 170-amino-acid chain: Probable Brix domain-containing ribosomal biogenesis protein (170 aa).

Positions 6–170 (TRIVITSSRD…IKFLKMILEA (165 aa)) constitute a Brix domain.

Probably involved in the biogenesis of the ribosome. The polypeptide is Probable Brix domain-containing ribosomal biogenesis protein (Saccharolobus solfataricus (strain ATCC 35092 / DSM 1617 / JCM 11322 / P2) (Sulfolobus solfataricus)).